Consider the following 257-residue polypeptide: Tryptophan synthase alpha chain (257 aa).

Residues Glu44 and Asp55 each act as proton acceptor in the active site.

The protein belongs to the TrpA family. Tetramer of two alpha and two beta chains.

It carries out the reaction (1S,2R)-1-C-(indol-3-yl)glycerol 3-phosphate + L-serine = D-glyceraldehyde 3-phosphate + L-tryptophan + H2O. The protein operates within amino-acid biosynthesis; L-tryptophan biosynthesis; L-tryptophan from chorismate: step 5/5. Its function is as follows. The alpha subunit is responsible for the aldol cleavage of indoleglycerol phosphate to indole and glyceraldehyde 3-phosphate. In Chlamydia caviae (strain ATCC VR-813 / DSM 19441 / 03DC25 / GPIC) (Chlamydophila caviae), this protein is Tryptophan synthase alpha chain.